We begin with the raw amino-acid sequence, 95 residues long: Aspartyl/glutamyl-tRNA(Asn/Gln) amidotransferase subunit C (95 aa).

It belongs to the GatC family. Heterotrimer of A, B and C subunits.

The catalysed reaction is L-glutamyl-tRNA(Gln) + L-glutamine + ATP + H2O = L-glutaminyl-tRNA(Gln) + L-glutamate + ADP + phosphate + H(+). The enzyme catalyses L-aspartyl-tRNA(Asn) + L-glutamine + ATP + H2O = L-asparaginyl-tRNA(Asn) + L-glutamate + ADP + phosphate + 2 H(+). In terms of biological role, allows the formation of correctly charged Asn-tRNA(Asn) or Gln-tRNA(Gln) through the transamidation of misacylated Asp-tRNA(Asn) or Glu-tRNA(Gln) in organisms which lack either or both of asparaginyl-tRNA or glutaminyl-tRNA synthetases. The reaction takes place in the presence of glutamine and ATP through an activated phospho-Asp-tRNA(Asn) or phospho-Glu-tRNA(Gln). The protein is Aspartyl/glutamyl-tRNA(Asn/Gln) amidotransferase subunit C of Clostridium botulinum (strain Loch Maree / Type A3).